We begin with the raw amino-acid sequence, 210 residues long: Chloramphenicol acetyltransferase (210 aa).

Residue H79 is part of the active site.

It belongs to the transferase hexapeptide repeat family.

It catalyses the reaction chloramphenicol + acetyl-CoA = chloramphenicol 3-acetate + CoA. Its function is as follows. This enzyme is an effector of chloramphenicol resistance in bacteria. The protein is Chloramphenicol acetyltransferase (cat) of Morganella morganii (Proteus morganii).